An 89-amino-acid polypeptide reads, in one-letter code: CRISPR-associated endoribonuclease Cas2 2 (89 aa).

Asp9 is a binding site for Mg(2+).

This sequence belongs to the CRISPR-associated endoribonuclease Cas2 protein family. Homodimer, forms a heterotetramer with a Cas1 homodimer. Requires Mg(2+) as cofactor.

Its function is as follows. CRISPR (clustered regularly interspaced short palindromic repeat), is an adaptive immune system that provides protection against mobile genetic elements (viruses, transposable elements and conjugative plasmids). CRISPR clusters contain sequences complementary to antecedent mobile elements and target invading nucleic acids. CRISPR clusters are transcribed and processed into CRISPR RNA (crRNA). Functions as a ssRNA-specific endoribonuclease. Involved in the integration of spacer DNA into the CRISPR cassette. The polypeptide is CRISPR-associated endoribonuclease Cas2 2 (Methanospirillum hungatei JF-1 (strain ATCC 27890 / DSM 864 / NBRC 100397 / JF-1)).